A 433-amino-acid chain; its full sequence is Protein translocase subunit SecY (433 aa).

10 consecutive transmembrane segments (helical) span residues 17 to 37, 71 to 91, 117 to 137, 141 to 161, 184 to 204, 212 to 232, 268 to 288, 310 to 330, 366 to 386, and 388 to 408; these read IVFTILILIVCRFGSFIPIPG, IFALAIMPYITASIIIQLMSV, LTVLLASFQAYGVAISLESIV, GPVVILAGFFFRITTVITLVV, LIIFIGIISGVPSAIISMFEL, PLIAIAVCIGVVVLIAIIIFF, GVIPPIFASSILLFPATLANF, YILLYVALIMFFSFFYTAIVF, LTVIGGIYLSVICVIPELLMN, and YVISLSLGGTSFLIVVNVVLD.

Belongs to the SecY/SEC61-alpha family. Component of the Sec protein translocase complex. Heterotrimer consisting of SecY, SecE and SecG subunits. The heterotrimers can form oligomers, although 1 heterotrimer is thought to be able to translocate proteins. Interacts with the ribosome. Interacts with SecDF, and other proteins may be involved. Interacts with SecA.

It localises to the cell inner membrane. Its function is as follows. The central subunit of the protein translocation channel SecYEG. Consists of two halves formed by TMs 1-5 and 6-10. These two domains form a lateral gate at the front which open onto the bilayer between TMs 2 and 7, and are clamped together by SecE at the back. The channel is closed by both a pore ring composed of hydrophobic SecY resides and a short helix (helix 2A) on the extracellular side of the membrane which forms a plug. The plug probably moves laterally to allow the channel to open. The ring and the pore may move independently. The sequence is that of Protein translocase subunit SecY from Rickettsia conorii (strain ATCC VR-613 / Malish 7).